The chain runs to 95 residues: MSRRCELTGKGPMTGNNVSHANNKTRRRFLPNLNDVTLQSETLGRGVKLRISAAALRSVDHRGGLDAFLAKAKDEDLSDAALKVKKEIAKAQAAA.

The disordered stretch occupies residues 1–22 (MSRRCELTGKGPMTGNNVSHAN).

Belongs to the bacterial ribosomal protein bL28 family.

This Ruegeria pomeroyi (strain ATCC 700808 / DSM 15171 / DSS-3) (Silicibacter pomeroyi) protein is Large ribosomal subunit protein bL28.